A 230-amino-acid polypeptide reads, in one-letter code: Pyridoxal phosphate homeostasis protein (230 aa).

K36 is modified (N6-(pyridoxal phosphate)lysine).

Belongs to the pyridoxal phosphate-binding protein YggS/PROSC family.

Its function is as follows. Perhaps involved in proline biosynthesis. Pyridoxal 5'-phosphate (PLP)-binding protein, which is involved in PLP homeostasis. This is Pyridoxal phosphate homeostasis protein from Pseudomonas aeruginosa (strain ATCC 15692 / DSM 22644 / CIP 104116 / JCM 14847 / LMG 12228 / 1C / PRS 101 / PAO1).